Reading from the N-terminus, the 234-residue chain is Homeobox protein ceh-51 (234 aa).

2 disordered regions span residues 128 to 154 (PPSF…RTPF) and 209 to 234 (QIKQ…HVIS). The segment at residues 147-206 (RRGARTPFSDSQLYALRTRFEQCDTIKVDERRKLGAVIGLSPEQIKIWFQNRRFKLRKEK) is a DNA-binding region (homeobox). Residues 220–234 (SAKEEAEEDQKHVIS) are compositionally biased toward basic and acidic residues.

The protein belongs to the NK-2 homeobox family.

Its subcellular location is the nucleus. In terms of biological role, required for mesoderm development, including specification of muscle and coelomocyte precursors. The protein is Homeobox protein ceh-51 of Caenorhabditis elegans.